The sequence spans 179 residues: Acireductone dioxygenase (179 aa).

Residues H85, H87, E91, and H132 each coordinate Fe(2+). Ni(2+) contacts are provided by H85, H87, E91, and H132.

Belongs to the acireductone dioxygenase (ARD) family. Fe(2+) serves as cofactor. Ni(2+) is required as a cofactor.

The protein localises to the cytoplasm. It localises to the nucleus. The catalysed reaction is 1,2-dihydroxy-5-(methylsulfanyl)pent-1-en-3-one + O2 = 4-methylsulfanyl-2-oxobutanoate + formate + 2 H(+). The enzyme catalyses 1,2-dihydroxy-5-(methylsulfanyl)pent-1-en-3-one + O2 = 3-(methylsulfanyl)propanoate + CO + formate + 2 H(+). It functions in the pathway amino-acid biosynthesis; L-methionine biosynthesis via salvage pathway; L-methionine from S-methyl-5-thio-alpha-D-ribose 1-phosphate: step 5/6. Its function is as follows. Catalyzes 2 different reactions between oxygen and the acireductone 1,2-dihydroxy-3-keto-5-methylthiopentene (DHK-MTPene) depending upon the metal bound in the active site. Fe-containing acireductone dioxygenase (Fe-ARD) produces formate and 2-keto-4-methylthiobutyrate (KMTB), the alpha-ketoacid precursor of methionine in the methionine recycle pathway. Ni-containing acireductone dioxygenase (Ni-ARD) produces methylthiopropionate, carbon monoxide and formate, and does not lie on the methionine recycle pathway. The polypeptide is Acireductone dioxygenase (Saccharomyces cerevisiae (strain ATCC 204508 / S288c) (Baker's yeast)).